We begin with the raw amino-acid sequence, 1051 residues long: MLPRKREIVAGEVEDLQKKTRAGEGEVTREEGDAAMAGRGNEIDEDLHSRQLAVYGRETMKRLFGSNVLVSGLQGLGAEIAKNLVLAGVKSVTLHDDGNVELWDLSSNFFLSENDVGQNRAQACVQKLQELNNAVLVSALTGDLTKEHLSKFQAVVFTDISLDKAIEFDDYCHSQQPPIAFIKSEVRGLFGSVFCDFGPEFTVLDVDGEEPHTGIVASISNDNPALVSCVDDERLEFQDGDLVVFSEVHGMTELNDGKPRKVKNARPYSFFLEEDTSSFGAYVRGGIVTQVKPPKVIKFKPLKEAMSEPGEFLMSDFSKFERPPLLHLAFQALDKFRTELSRFPVAGSTDDVQRVIEYAISINDTLGDRKLEEIDKKLLHHFASGSRAVLNPMAAMFGGIVGQEVVKACSGKFHPLYQFFYFDSVESLPVDPLEPGDLKPKNSRYDAQISVFGSKLQNKLEEAKIFMVGSGALGCEFLKNLALMGISCSQNGNLTLTDDDVIEKSNLSRQFLFRDWNIGQPKSTVAATAAMVINPKLHVEALQNRASPETENVFNDAFWENLDAVVNALDNVTARMYIDSRCVYFQKPLLESGTLGAKCNTQMVIPHLTENYGASRDPPEKQAPMCTVHSFPHNIDHCLTWARSEFEGLLEKTPTEVNAFLSNPTTYISAARTAGDAQARDQLERVIECLDRDKCETFQDSITWARLKFEDYFSNRVKQLTFTFPEDSMTSSGAPFWSAPKRFPRPVEFSSSDQSQLSFILAAAILRAETFGIPIPEWAKTPNKLAAEAVDKVIVPDFQPKQGVKIVTHEKATSLSSASVDDAAVIEELIAKLEEVSKTLPSGFHMNPIQFEKDDDTNFHMDVIAGFANMRARNYSIPEVDKLKAKFIAGRIIPAIATSTAMATGLVCLELYKALAGGHKVEDYRNTFANLAIPLFSIAEPVPPKTIKHQELSWTVWDRWTVTGNITLRELLEWLKEKGLNAYSISCGTSLLYNSMFPRHKERLDRKVVDVAREVAKMEVPSYRRHLDVVVACEDDDDNDVDIPLVSVYFR.

2 repeat units span residues 56-194 and 453-605. The interval 56–605 is 2 approximate repeats; sequence GRETMKRLFG…GAKCNTQMVI (550 aa). ATP-binding positions include Ala-472, Asp-498, Arg-509, Lys-522, and 570-571; that span reads DN. Cys-626 acts as the Glycyl thioester intermediate in catalysis.

Belongs to the ubiquitin-activating E1 family. In terms of assembly, monomer. In terms of processing, the N-terminus is blocked.

The enzyme catalyses ATP + ubiquitin + [E1 ubiquitin-activating enzyme]-L-cysteine = AMP + diphosphate + S-ubiquitinyl-[E1 ubiquitin-activating enzyme]-L-cysteine.. It functions in the pathway protein modification; protein ubiquitination. In terms of biological role, activates ubiquitin by first adenylating its C-terminal glycine residue with ATP, and thereafter linking this residue to the side chain of a cysteine residue in E1, yielding a ubiquitin-E1 thioester and free AMP. This Triticum aestivum (Wheat) protein is Ubiquitin-activating enzyme E1 1.